The following is a 278-amino-acid chain: Protoheme IX farnesyltransferase (278 aa).

Transmembrane regions (helical) follow at residues 12–32 (VIWL…QTVD), 33–53 (WSKL…SAAF), 83–103 (ALVY…YLLG), 105–125 (LPGL…TIWL), 130–150 (WLNI…GYAL), 157–177 (LPAV…IWAL), 204–224 (VIIS…YLAF), 228–248 (LLGL…SILA), and 257–277 (MWKM…ALVF).

It belongs to the UbiA prenyltransferase family. Protoheme IX farnesyltransferase subfamily.

Its subcellular location is the cell membrane. The catalysed reaction is heme b + (2E,6E)-farnesyl diphosphate + H2O = Fe(II)-heme o + diphosphate. It functions in the pathway porphyrin-containing compound metabolism; heme O biosynthesis; heme O from protoheme: step 1/1. In terms of biological role, converts heme B (protoheme IX) to heme O by substitution of the vinyl group on carbon 2 of heme B porphyrin ring with a hydroxyethyl farnesyl side group. This chain is Protoheme IX farnesyltransferase, found in Pyrobaculum islandicum (strain DSM 4184 / JCM 9189 / GEO3).